A 421-amino-acid polypeptide reads, in one-letter code: Forkhead box protein fkh-3 (421 aa).

A DNA-binding region (fork-head) is located at residues 118–218 (RPPISYVALC…SDADFDFFRK (101 aa)).

The protein localises to the nucleus. Functionally, transcription factor. Binds to DNA sequence motif 5'-CTGTTTCA-3'. Regulates expression of a class of small RNAs, known as 21U-RNAs, perhaps acting redundantly with fkh-4 and fkh-5. The polypeptide is Forkhead box protein fkh-3 (Caenorhabditis elegans).